The sequence spans 341 residues: Cathepsin B-like cysteine proteinase 1 (341 aa).

The N-terminal stretch at 1 to 19 is a signal peptide; the sequence is MKYLFFALCLYLYQGISEA. Positions 20 to 88 are cleaved as a propeptide — activation peptide; sequence EVPAEQIPLE…VEDEELEENN (69 aa). N-linked (GlcNAc...) asparagine glycosylation occurs at Asn-103. 6 disulfide bridges follow: Cys-104-Cys-133, Cys-116-Cys-160, Cys-152-Cys-218, Cys-153-Cys-156, Cys-189-Cys-222, and Cys-197-Cys-209. Cys-119 is a catalytic residue. N-linked (GlcNAc...) asparagine glycosylation is present at Asn-202. Active-site residues include His-288 and Asn-308.

Belongs to the peptidase C1 family.

In terms of biological role, expression of the protease correlates with blood-feeding and suggests a role for the protease in blood digestion. The polypeptide is Cathepsin B-like cysteine proteinase 1 (CP-1) (Ostertagia ostertagi (Brown stomach worm)).